Reading from the N-terminus, the 280-residue chain is Putative pyruvate, phosphate dikinase regulatory protein (280 aa).

156 to 163 contributes to the ADP binding site; the sequence is GVSRTSKT.

The protein belongs to the pyruvate, phosphate/water dikinase regulatory protein family. PDRP subfamily.

It carries out the reaction N(tele)-phospho-L-histidyl/L-threonyl-[pyruvate, phosphate dikinase] + ADP = N(tele)-phospho-L-histidyl/O-phospho-L-threonyl-[pyruvate, phosphate dikinase] + AMP + H(+). The enzyme catalyses N(tele)-phospho-L-histidyl/O-phospho-L-threonyl-[pyruvate, phosphate dikinase] + phosphate + H(+) = N(tele)-phospho-L-histidyl/L-threonyl-[pyruvate, phosphate dikinase] + diphosphate. Its function is as follows. Bifunctional serine/threonine kinase and phosphorylase involved in the regulation of the pyruvate, phosphate dikinase (PPDK) by catalyzing its phosphorylation/dephosphorylation. In Hyphomonas neptunium (strain ATCC 15444), this protein is Putative pyruvate, phosphate dikinase regulatory protein.